The following is a 393-amino-acid chain: S-adenosylmethionine synthase (393 aa).

Glutamate 9 is a Mg(2+) binding site. Histidine 15 provides a ligand contact to ATP. Position 17 (aspartate 17) interacts with Mg(2+). Glutamate 43 lines the K(+) pocket. Residues glutamate 56 and glutamine 99 each contribute to the L-methionine site. ATP contacts are provided by residues 167–169 (DGK), 235–238 (SGRF), aspartate 246, 252–253 (RK), alanine 269, lysine 273, and lysine 277. Aspartate 246 is a binding site for L-methionine. Lysine 277 contacts L-methionine.

It belongs to the AdoMet synthase family. As to quaternary structure, homotetramer; dimer of dimers. The cofactor is Mn(2+). Mg(2+) is required as a cofactor. Co(2+) serves as cofactor. It depends on K(+) as a cofactor.

The protein localises to the cytoplasm. It carries out the reaction L-methionine + ATP + H2O = S-adenosyl-L-methionine + phosphate + diphosphate. The protein operates within amino-acid biosynthesis; S-adenosyl-L-methionine biosynthesis; S-adenosyl-L-methionine from L-methionine: step 1/1. Increased activity in the presence of 25 percent acetonitrile, methanol or dimethylformamide. Its function is as follows. Catalyzes the formation of S-adenosylmethionine from methionine and ATP. In Acacia koa (Koa tree), this protein is S-adenosylmethionine synthase.